Consider the following 261-residue polypeptide: (R)-S-adenosyl-L-methionine hydrolase (261 aa).

Adenosine-binding residues include D12, D72, and N187. The (R)-S-adenosyl-L-methionine site is built by N187, S231, and V239. Residue V239 coordinates adenosine.

The protein belongs to the SAM hydrolase / SAM-dependent halogenase family.

It catalyses the reaction (R)-S-adenosyl-L-methionine + H2O = adenosine + L-methionine + H(+). Activity is inhibited by chloride. Functionally, catalyzes the hydrolysis of S-adenosyl-L-methionine (SAM) into adenosine and L-methionine. Is likely stereoselective, specifically hydrolyzing (R)-S-adenosyl-L-methionine ((R)-SAM), the inactive form of the ubiquitous cofactor SAM, and not the active form of SAM, (S)-S-adenosyl-L-methionine. Probaly plays a role in preventing accumulation of (R)-S-adenosyl-L-methionine in cells; maintenance of (S)-S-denosyl-L-methionine homochirality is important for cellular health given that the (R)-form is largely inactive as a methyl donor and can function as an inhibitor of methyltransferases. Shows very slow iodinase activity in vitro. This Salinispora arenicola (strain CNS-205) protein is (R)-S-adenosyl-L-methionine hydrolase.